The sequence spans 148 residues: MFDVTLLILLGLAALGFISHNTTVAVSILVLIIVRVTPLSTFFPWIEKQGLSIGIIILTIGVMAPIASGTLPPSTLIHSFLNWKSLVAIAVGVIVSWLGGRGVTLMGSQPQLVAGLLVGTVLGVALFRGVPVGPLIATGLVSLIVGKQ.

4 helical membrane passes run 14-34 (ALGF…LIIV), 51-71 (LSIG…SGTL), 86-106 (LVAI…VTLM), and 112-132 (LVAG…GVPV).

It belongs to the UPF0756 family.

Its subcellular location is the cell membrane. This is UPF0756 membrane protein YeaL from Escherichia coli O157:H7.